Here is a 289-residue protein sequence, read N- to C-terminus: Phospholipase A1 (289 aa).

Positions 1–20 (MRTGPGWLLAAAALPFFACA) are cleaved as a signal peptide. Topologically, residues 21–52 (QEATIDKVHDTPAVRGSIIANMLQEHDNPFTL) are periplasmic. Residues 53-65 (YPYESNYLLYTYT) form a beta stranded membrane-spanning segment. Topologically, residues 66 to 84 (SDLNKKAIESYNWSDNANK) are extracellular. A beta stranded membrane pass occupies residues 85 to 99 (DEVKFQLSLAFPLWR). Residues 100–105 (GILGDN) are Periplasmic-facing. Residues 106–118 (SLLGASYTQRSWW) traverse the membrane as a beta stranded segment. The Extracellular portion of the chain corresponds to 119–128 (QLSNTGESAP). Ser126 provides a ligand contact to Ca(2+). The chain crosses the membrane as a beta stranded span at residues 129-148 (FRETNYEPQLFLGFATDYSV). Residues 149 to 150 (GD) lie on the Periplasmic side of the membrane. Residues 151 to 164 (WTLRDAEFGYNHQS) form a beta stranded membrane-spanning segment. His162 (proton acceptor) is an active-site residue. Ser164 (nucleophile) is an active-site residue. Over 165-173 (NGRSDPTSR) the chain is Extracellular. Residues Arg167 and Ser172 each coordinate Ca(2+). Residues 174–186 (SWNRLYSRLMAQN) form a beta stranded membrane-spanning segment. The Periplasmic portion of the chain corresponds to 187 to 188 (GN). A beta stranded membrane pass occupies residues 189–198 (WLVEVKPWYV). Over 199–216 (IGDTSDNKNITKYMGYYQ) the chain is Extracellular. Asp204 is a Ca(2+) binding site. Residues 217–223 (LKIGYQL) form a beta stranded membrane-spanning segment. Residues 224–225 (GE) lie on the Periplasmic side of the membrane. Residues 226–234 (AVLSAKGQY) form a beta stranded membrane-spanning segment. The Extracellular portion of the chain corresponds to 235-241 (NWNTGYG). A beta stranded membrane pass occupies residues 242–250 (GAELGVSYP). At 251-255 (ITKHV) the chain is on the periplasmic side. Residues 256 to 265 (RFYTQVYSGY) form a beta stranded membrane-spanning segment. The Extracellular portion of the chain corresponds to 266 to 274 (GESLIDYDF). The chain crosses the membrane as a beta stranded span at residues 275–286 (NQTRVGMGVMLN). The Periplasmic portion of the chain corresponds to 287–289 (DLF).

Belongs to the phospholipase A1 family. Homodimer; dimerization is reversible, and the dimeric form is the active one. Ca(2+) is required as a cofactor.

The protein resides in the cell outer membrane. The catalysed reaction is a 1,2-diacyl-sn-glycero-3-phosphocholine + H2O = a 2-acyl-sn-glycero-3-phosphocholine + a fatty acid + H(+). It carries out the reaction a 1,2-diacyl-sn-glycero-3-phosphocholine + H2O = a 1-acyl-sn-glycero-3-phosphocholine + a fatty acid + H(+). Hydrolysis of phosphatidylcholine with phospholipase A2 (EC 3.1.1.4) and phospholipase A1 (EC 3.1.1.32) activities. The sequence is that of Phospholipase A1 (pldA) from Proteus vulgaris.